We begin with the raw amino-acid sequence, 1525 residues long: Multidrug resistance protein mrp-7 (1525 aa).

Over 1 to 24 (MLSSFCGDGHPFSTGLPNVSICAQ) the chain is Extracellular. Residue asparagine 18 is glycosylated (N-linked (GlcNAc...) asparagine). The chain crosses the membrane as a helical span at residues 25 to 45 (HTVLVWVPAAFFLLTLPFLSA). Over 46-66 (QCHLTAQRFARLPFSAHFIIK) the chain is Cytoplasmic. A helical membrane pass occupies residues 67–87 (LLLVAFLAANSLATWCYVLFS). The Extracellular segment spans residues 88 to 94 (KNSYAAA). A helical transmembrane segment spans residues 95 to 115 (YYVYPGLWVLVWTGTFLVHLI). Topologically, residues 116–118 (RLR) are cytoplasmic. A helical transmembrane segment spans residues 119–139 (CGLVSSGIQHVTSLIFLLCGA). Over 140-165 (PEFYQWIRMENSNSFPNDLTTTDSAQ) the chain is Extracellular. The chain crosses the membrane as a helical span at residues 166–186 (FLSIAYLSWYSALILYTFSLC). Over 187–346 (FADPRGAKTD…APFWKGMALS (160 aa)) the chain is Cytoplasmic. An ABC transmembrane type-1 1 domain is found at 305-587 (LLASTLKFVS…IALLINQAVQ (283 aa)). A helical transmembrane segment spans residues 347-367 (ILMFSVSELRSLILNGYFYIM). Residues 368–434 (FRMGTKIQTS…SCPYQITFAL (67 aa)) lie on the Extracellular side of the membrane. A helical transmembrane segment spans residues 435-455 (VYLFITLGYSALPGVVIMVIF). Residues 456–535 (VPMNIISSMI…NILDSFNTAS (80 aa)) are Cytoplasmic-facing. Residues 536 to 556 (PFLVALFSFGTFVLSNPSHLL) traverse the membrane as a helical segment. Over 557 to 561 (TPQIA) the chain is Extracellular. A helical membrane pass occupies residues 562–582 (FVSLALFNQLRSPMTMIALLI). The Cytoplasmic segment spans residues 583–953 (NQAVQAVVSN…ATYQLYVKAA (371 aa)). The ABC transporter 1 domain maps to 622 to 849 (VRVENLTASW…RGLFFDFMEE (228 aa)). 659 to 666 (GKVGSGKS) lines the ATP pocket. The disordered stretch occupies residues 900-925 (ELTTQISTMSSPEKPPTGTSPAAATE). Residues 954-974 (GYLLSIAFIGFFIVYMTLQIL) traverse the membrane as a helical segment. Residues 959–1245 (IAFIGFFIVY…AVRQVSEIEA (287 aa)) enclose the ABC transmembrane type-1 2 domain. The Extracellular portion of the chain corresponds to 975–1005 (RSFWLSAWSDEYDPDSPSAHPMAKGWRLGVY). Residues 1006–1026 (GALGFSETACFFVALLALVFV) traverse the membrane as a helical segment. Over 1027–1068 (GQRASKNLHGPLIHNLMRSPMSFYDTTPLGRILNRCAKDIET) the chain is Cytoplasmic. The chain crosses the membrane as a helical span at residues 1069–1089 (IDMMLPMNFRYLVMCVLQVAF). Threonine 1090 is a topological domain (extracellular). Residues 1091–1111 (LIVIIISTPLFAVVILPLALI) traverse the membrane as a helical segment. Topologically, residues 1112-1184 (YLIFLRYYVP…RYSSLVSNRW (73 aa)) are cytoplasmic. The helical transmembrane segment at 1185 to 1205 (LAVRLEFVGNCIIFFAALFAV) threads the bilayer. The Extracellular segment spans residues 1206–1525 (LSKEFGWITS…ADAAEQDKHE (320 aa)). An N-linked (GlcNAc...) asparagine glycan is attached at asparagine 1228. Residues 1282-1516 (VKFDGYSTRY…KNSAFAKMVA (235 aa)) form the ABC transporter 2 domain. 1316 to 1323 (GRTGAGKS) contributes to the ATP binding site. N-linked (GlcNAc...) asparagine glycosylation is found at asparagine 1358 and asparagine 1418.

It belongs to the ABC transporter superfamily. ABCC family. Conjugate transporter (TC 3.A.1.208) subfamily. In terms of tissue distribution, expressed in head neurons, including the dopamine (DA) motor neuron, and other cells in the body.

It is found in the cell membrane. Functionally, negatively regulates cellular toxicity by mediating the export of environmental toxicants such as methylmercury out of the cell. Plays a role in inhibiting methylmercury-induced dopamine (DA) motor neuron degeneration. Not involved in Mn(2+)- or Al(3+)-associated toxicity. The sequence is that of Multidrug resistance protein mrp-7 from Caenorhabditis elegans.